The sequence spans 304 residues: Type II restriction enzyme LlaDCHI (304 aa).

It belongs to the DpnII type II restriction endonuclease family.

The catalysed reaction is Endonucleolytic cleavage of DNA to give specific double-stranded fragments with terminal 5'-phosphates.. Its function is as follows. A P subtype restriction enzyme that recognizes the double-stranded unmethylated sequence 5'-GATC-3' and cleaves before G-1. In Lactococcus lactis subsp. cremoris (Streptococcus cremoris), this protein is Type II restriction enzyme LlaDCHI (llaDCHIR).